The following is a 588-amino-acid chain: Ufm1-specific protease (588 aa).

Catalysis depends on residues cysteine 420, aspartate 544, and histidine 546.

Belongs to the peptidase C78 family. Interacts with odr-4.

The protein resides in the endoplasmic reticulum membrane. Its subcellular location is the cytoplasm. The protein localises to the perinuclear region. Functionally, thiol protease which recognizes and hydrolyzes the peptide bond at the C-terminal Gly of ufm-1, a ubiquitin-like modifier protein bound to a number of target proteins. Required, with oct-4, for the localization of a subset of 7 transmembrane domain odorant receptors, including odr-10, to the cilia of olfactory neurons AWA and AWC. Operates in aggregation behavior, and responses to oxygen levels. This Caenorhabditis briggsae protein is Ufm1-specific protease.